The following is a 490-amino-acid chain: Bifunctional protein HldE (490 aa).

The ribokinase stretch occupies residues 1–330 (MDRTNIENFL…EAMAHHALEY (330 aa)). Residue 205–208 (NRKE) coordinates ATP. The active site involves Asp-275. The segment at 356–490 (FTNGCFDLLH…ERILDRYEQG (135 aa)) is cytidylyltransferase.

It in the N-terminal section; belongs to the carbohydrate kinase PfkB family. This sequence in the C-terminal section; belongs to the cytidylyltransferase family. Homodimer.

The enzyme catalyses D-glycero-beta-D-manno-heptose 7-phosphate + ATP = D-glycero-beta-D-manno-heptose 1,7-bisphosphate + ADP + H(+). It catalyses the reaction D-glycero-beta-D-manno-heptose 1-phosphate + ATP + H(+) = ADP-D-glycero-beta-D-manno-heptose + diphosphate. Its pathway is nucleotide-sugar biosynthesis; ADP-L-glycero-beta-D-manno-heptose biosynthesis; ADP-L-glycero-beta-D-manno-heptose from D-glycero-beta-D-manno-heptose 7-phosphate: step 1/4. It functions in the pathway nucleotide-sugar biosynthesis; ADP-L-glycero-beta-D-manno-heptose biosynthesis; ADP-L-glycero-beta-D-manno-heptose from D-glycero-beta-D-manno-heptose 7-phosphate: step 3/4. Functionally, catalyzes the phosphorylation of D-glycero-D-manno-heptose 7-phosphate at the C-1 position to selectively form D-glycero-beta-D-manno-heptose-1,7-bisphosphate. In terms of biological role, catalyzes the ADP transfer from ATP to D-glycero-beta-D-manno-heptose 1-phosphate, yielding ADP-D-glycero-beta-D-manno-heptose. This Syntrophotalea carbinolica (strain DSM 2380 / NBRC 103641 / GraBd1) (Pelobacter carbinolicus) protein is Bifunctional protein HldE.